The chain runs to 162 residues: uncharacterized protein (162 aa).

The N-terminal stretch at 1–34 is a signal peptide; sequence MRKKNNIKKWLLIIAGFLIICIITLFVMVSGNKV.

This is an uncharacterized protein from Bacillus subtilis (strain 168).